We begin with the raw amino-acid sequence, 144 residues long: Large ribosomal subunit protein uL22 (144 aa).

The segment at 123-144 (ELVKKRTMGHKKEKAKQKQKQQ) is disordered. Residues 125–144 (VKKRTMGHKKEKAKQKQKQQ) are compositionally biased toward basic residues.

The protein belongs to the universal ribosomal protein uL22 family. In terms of assembly, part of the 50S ribosomal subunit.

Its function is as follows. This protein binds specifically to 23S rRNA; its binding is stimulated by other ribosomal proteins, e.g. L4, L17, and L20. It is important during the early stages of 50S assembly. It makes multiple contacts with different domains of the 23S rRNA in the assembled 50S subunit and ribosome. In terms of biological role, the globular domain of the protein is located near the polypeptide exit tunnel on the outside of the subunit, while an extended beta-hairpin is found that lines the wall of the exit tunnel in the center of the 70S ribosome. The protein is Large ribosomal subunit protein uL22 of Mycoplasma genitalium (strain ATCC 33530 / DSM 19775 / NCTC 10195 / G37) (Mycoplasmoides genitalium).